We begin with the raw amino-acid sequence, 195 residues long: UPF0316 protein Pcar_2434 (195 aa).

Helical transmembrane passes span Leu-13–Leu-33, Trp-45–Met-65, and Val-71–Ile-91.

The protein belongs to the UPF0316 family.

It localises to the cell membrane. This is UPF0316 protein Pcar_2434 from Syntrophotalea carbinolica (strain DSM 2380 / NBRC 103641 / GraBd1) (Pelobacter carbinolicus).